A 606-amino-acid polypeptide reads, in one-letter code: MPLRLSSLFLRTLREDPVDADVDSHKLLVRAGYIRRAAPGIYTWLPLGLAVLRRVEGIVREEMDAIGAQEVHFPALLPREPYEASNRWTEYGENLFRLQDRKGADYLLAPTHEEMFTLLVKDMYSSYKDLPVMLYQIQTKYRDEARPRAGLLRGREFIMKDSYSFDVDDAGLDDAYAKHRAAYVRIFERLGLPVVAVSATSGAMGGSRSEEFMHPSVVGEDTFVRSAGGYAANVEAVTTVVPEPVDCTDAPAAQVHRTPDSPTIDTLVSRSNELHPREGQPWTAADTLKNVLLSVSLPEGGTQLVAVGVPGDREIDLKRVEAGIGGALGIGGELEVEAASEEQLRAVPELVKGYIGPGLSREDALLGTESPTGIPYFVDPRVVPGTRWITGANVAEAHVYDLVAERDFTWDATLEACTVREGDPAPDGSGPLEIARGMEMGHVFQLGRKYAEALGLKVLDNNGKLVTVTMGSYGIGVTRALAAVAEFYHDEHGLLWPRNLSPADVHVVATGKGPEVLEAAEEIVAHLEAAGVSVLFDDRPKVSPGVKFRDAELLGVPTVLVVGRGLADGVLELKDRRSGTSRDIARDRVVAEITAELQGQEGPAAE.

The protein belongs to the class-II aminoacyl-tRNA synthetase family. ProS type 1 subfamily. As to quaternary structure, homodimer.

It is found in the cytoplasm. It carries out the reaction tRNA(Pro) + L-proline + ATP = L-prolyl-tRNA(Pro) + AMP + diphosphate. In terms of biological role, catalyzes the attachment of proline to tRNA(Pro) in a two-step reaction: proline is first activated by ATP to form Pro-AMP and then transferred to the acceptor end of tRNA(Pro). As ProRS can inadvertently accommodate and process non-cognate amino acids such as alanine and cysteine, to avoid such errors it has two additional distinct editing activities against alanine. One activity is designated as 'pretransfer' editing and involves the tRNA(Pro)-independent hydrolysis of activated Ala-AMP. The other activity is designated 'posttransfer' editing and involves deacylation of mischarged Ala-tRNA(Pro). The misacylated Cys-tRNA(Pro) is not edited by ProRS. In Kocuria rhizophila (strain ATCC 9341 / DSM 348 / NBRC 103217 / DC2201), this protein is Proline--tRNA ligase.